Consider the following 100-residue polypeptide: Urease subunit gamma (100 aa).

Belongs to the urease gamma subunit family. In terms of assembly, heterotrimer of UreA (gamma), UreB (beta) and UreC (alpha) subunits. Three heterotrimers associate to form the active enzyme.

Its subcellular location is the cytoplasm. The enzyme catalyses urea + 2 H2O + H(+) = hydrogencarbonate + 2 NH4(+). Its pathway is nitrogen metabolism; urea degradation; CO(2) and NH(3) from urea (urease route): step 1/1. This chain is Urease subunit gamma, found in Tolumonas auensis (strain DSM 9187 / NBRC 110442 / TA 4).